Consider the following 236-residue polypeptide: Phosphoribosylaminoimidazole-succinocarboxamide synthase (236 aa).

This sequence belongs to the SAICAR synthetase family.

The enzyme catalyses 5-amino-1-(5-phospho-D-ribosyl)imidazole-4-carboxylate + L-aspartate + ATP = (2S)-2-[5-amino-1-(5-phospho-beta-D-ribosyl)imidazole-4-carboxamido]succinate + ADP + phosphate + 2 H(+). It participates in purine metabolism; IMP biosynthesis via de novo pathway; 5-amino-1-(5-phospho-D-ribosyl)imidazole-4-carboxamide from 5-amino-1-(5-phospho-D-ribosyl)imidazole-4-carboxylate: step 1/2. The chain is Phosphoribosylaminoimidazole-succinocarboxamide synthase from Campylobacter curvus (strain 525.92).